We begin with the raw amino-acid sequence, 237 residues long: 4-hydroxy-tetrahydrodipicolinate reductase (237 aa).

Residues 11 to 16 (GASGRM), 92 to 94 (GTT), and 116 to 119 (GSNF) each bind NAD(+). His148 acts as the Proton donor/acceptor in catalysis. His149 serves as a coordination point for (S)-2,3,4,5-tetrahydrodipicolinate. The active-site Proton donor is Lys152. Position 158 to 159 (158 to 159 (GS)) interacts with (S)-2,3,4,5-tetrahydrodipicolinate.

Belongs to the DapB family.

The protein resides in the cytoplasm. The enzyme catalyses (S)-2,3,4,5-tetrahydrodipicolinate + NAD(+) + H2O = (2S,4S)-4-hydroxy-2,3,4,5-tetrahydrodipicolinate + NADH + H(+). It catalyses the reaction (S)-2,3,4,5-tetrahydrodipicolinate + NADP(+) + H2O = (2S,4S)-4-hydroxy-2,3,4,5-tetrahydrodipicolinate + NADPH + H(+). It participates in amino-acid biosynthesis; L-lysine biosynthesis via DAP pathway; (S)-tetrahydrodipicolinate from L-aspartate: step 4/4. In terms of biological role, catalyzes the conversion of 4-hydroxy-tetrahydrodipicolinate (HTPA) to tetrahydrodipicolinate. This Xylella fastidiosa (strain M12) protein is 4-hydroxy-tetrahydrodipicolinate reductase.